A 78-amino-acid chain; its full sequence is AELKSCFPVGHECDDDASNCNCCGDDVYCACGWGRWNCKCKVADQSYAYGICKDKVNCPNRHLWPAKECKMPCRRNCG.

7 disulfide bridges follow: C6/C23, C13/C29, C20/C52, C22/C40, C31/C38, C58/C73, and C69/C77.

As to expression, expressed by the venom gland.

The protein localises to the secreted. In terms of biological role, lethal neurotoxin. Causes spastic paralysis and death in mice in 4-6 minutes after intracerebroventricular injection at dose levels of 1.5 ug per mouse. This Phoneutria keyserlingi (Brazilian wandering spider) protein is U5-ctenitoxin-Pk1a.